A 109-amino-acid chain; its full sequence is Nucleoid-associated protein HAPS_1040 (109 aa).

A disordered region spans residues 1–21; it reads MFGKGGLGGLMKQAQQMQERM. Positions 10 to 19 are enriched in low complexity; sequence LMKQAQQMQE.

This sequence belongs to the YbaB/EbfC family. As to quaternary structure, homodimer.

The protein resides in the cytoplasm. The protein localises to the nucleoid. In terms of biological role, binds to DNA and alters its conformation. May be involved in regulation of gene expression, nucleoid organization and DNA protection. This is Nucleoid-associated protein HAPS_1040 from Glaesserella parasuis serovar 5 (strain SH0165) (Haemophilus parasuis).